Here is a 1014-residue protein sequence, read N- to C-terminus: Resistance to glucose repression protein 1 (1014 aa).

A disordered region spans residues M1–F63. An N-acetylserine modification is found at S2. The span at G11–V34 shows a compositional bias: basic and acidic residues. At T73 the chain carries Phosphothreonine. S75 is subject to Phosphoserine. Disordered stretches follow at residues L90 to P144 and S236 to K270. A compositionally biased stretch (low complexity) spans Y104 to S115. A phosphoserine mark is found at S242 and S254. Residues D247–K260 are compositionally biased toward basic and acidic residues. The Nuclear localization signal signature appears at K277 to R283. Phosphoserine is present on S311. The segment at Y340–N463 is disordered. 4 stretches are compositionally biased toward polar residues: residues E343–S352, S361–N370, H389–S407, and L415–E455. S421 carries the post-translational modification Phosphoserine. Y480 carries the post-translational modification Phosphotyrosine. Residue S490 is modified to Phosphoserine. Disordered regions lie at residues E531–H557 and S570–R591. Phosphoserine is present on residues S570, S572, and S576. Residues I578–R591 show a composition bias toward polar residues. The Nuclear localization signal motif lies at R595 to K599. S610, S614, and S680 each carry phosphoserine. The segment at S690–P897 is disordered. Positions Y722–S740 are enriched in low complexity. The segment covering S741–H758 has biased composition (acidic residues). 2 stretches are compositionally biased toward polar residues: residues L770–G802 and R822–S833. Positions K873–K879 match the Nuclear localization signal motif. Polar residues predominate over residues S884–P897. At T896 the chain carries Phosphothreonine. S898 is subject to Phosphoserine. Basic and acidic residues predominate over residues K959–S972. The disordered stretch occupies residues K959–H982. A Phosphoserine modification is found at S980.

Interacts with SAK1.

It is found in the nucleus. Functionally, involved in RNA processing and negative regulation of glucose repression. Regulates the level of two antigens, P43 and P70. Binds to protein phosphatase type 1. Functions with REG2 and SNF1 protein kinase to regulate growth. Might regulate SNF1 directly or indirectly. The protein is Resistance to glucose repression protein 1 (REG1) of Saccharomyces cerevisiae (strain ATCC 204508 / S288c) (Baker's yeast).